The chain runs to 114 residues: Aspartate 1-decarboxylase (114 aa).

The active-site Schiff-base intermediate with substrate; via pyruvic acid is the Ser25. Ser25 is modified (pyruvic acid (Ser)). A substrate-binding site is contributed by Thr57. Tyr58 acts as the Proton donor in catalysis. 71–73 contacts substrate; that stretch reads GAA.

It belongs to the PanD family. As to quaternary structure, heterooctamer of four alpha and four beta subunits. Pyruvate serves as cofactor. Post-translationally, is synthesized initially as an inactive proenzyme, which is activated by self-cleavage at a specific serine bond to produce a beta-subunit with a hydroxyl group at its C-terminus and an alpha-subunit with a pyruvoyl group at its N-terminus.

The protein localises to the cytoplasm. It carries out the reaction L-aspartate + H(+) = beta-alanine + CO2. Its pathway is cofactor biosynthesis; (R)-pantothenate biosynthesis; beta-alanine from L-aspartate: step 1/1. Functionally, catalyzes the pyruvoyl-dependent decarboxylation of aspartate to produce beta-alanine. The chain is Aspartate 1-decarboxylase from Campylobacter hominis (strain ATCC BAA-381 / DSM 21671 / CCUG 45161 / LMG 19568 / NCTC 13146 / CH001A).